The sequence spans 251 residues: MQPGGTAGPEEAPMREAEAGPPQVGLSRPTCSLPASSPGPALPPGCVSRPDSGLPTTSLDSAPAQLPAALVDPQLPEAKLPRPSSGLTVASPGSAPALRWHLQAPNGLRSVGSSRPSLGLPAASAGPKRPEVGLSRPSSGLPAAFAGPSRPQVGLELGLEEQQVSLSGPSSILSAASPGAKLPRVSLSRPSSSCLPLASFSPAQPSSWLSAAFPGPAFDFWRPLQAQNLPSSGPLQARPRPRPHSGLSTPS.

Disordered regions lie at residues 1–93 (MQPG…ASPG), 107–152 (GLRS…SRPQ), 169–188 (PSSI…VSLS), and 224–251 (LQAQ…STPS). Residues 225-234 (QAQNLPSSGP) are compositionally biased toward polar residues.

This is an uncharacterized protein from Homo sapiens (Human).